The following is a 775-amino-acid chain: Kazrin (775 aa).

The interval 38–66 (AELSGGGGPGPGPGAAASASAAGDSAATN) is disordered. Residues 51-64 (GAAASASAAGDSAA) show a composition bias toward low complexity. Residues 74-256 (AQVLLREEVS…LATLTKDVPK (183 aa)) adopt a coiled-coil conformation. Positions 174–333 (RDFIRNYEQH…SAAEGDRSST (160 aa)) are interaction with PPL. Positions 290 to 427 (QQTLYHSHPP…QSLSLSEGEE (138 aa)) are disordered. Residues Ser-352, Ser-367, and Ser-387 each carry the phosphoserine modification. A compositionally biased stretch (polar residues) spans 411–422 (SQCSPTRQSLSL). 3 SAM domains span residues 446-511 (WKAG…YRDA), 524-588 (DHHW…LYQV), and 612-679 (WTNQ…SAVF). Disordered regions lie at residues 688–715 (REAE…SSGL) and 729–762 (RGFS…LEQC). Basic and acidic residues predominate over residues 732–742 (SSKDPDFHDDY).

This sequence belongs to the kazrin family. Isoform 2, isoform 3 and isoform 4 interact with PPL N-terminus. In terms of tissue distribution, isoform 2, isoform 3 and isoform 4 are expressed in several cell lines including keratinocytes and bladder and epidermoid carcinoma (at protein level). Isoform 2, isoform 3 and isoform 4 are expressed in hair follicle and interfollicular epidermis (at protein level).

The protein localises to the cytoplasm. Its subcellular location is the cytoskeleton. The protein resides in the cell junction. It localises to the desmosome. It is found in the nucleus. Functionally, component of the cornified envelope of keratinocytes. May be involved in the interplay between adherens junctions and desmosomes. The function in the nucleus is not known. In Homo sapiens (Human), this protein is Kazrin.